A 322-amino-acid polypeptide reads, in one-letter code: Aspartate carbamoyltransferase catalytic subunit (322 aa).

Carbamoyl phosphate-binding residues include R65 and T66. K93 is a binding site for L-aspartate. Carbamoyl phosphate is bound by residues R115, H143, and Q146. L-aspartate is bound by residues R176 and R230. Residues G271 and P272 each coordinate carbamoyl phosphate.

This sequence belongs to the aspartate/ornithine carbamoyltransferase superfamily. ATCase family. In terms of assembly, heterododecamer (2C3:3R2) of six catalytic PyrB chains organized as two trimers (C3), and six regulatory PyrI chains organized as three dimers (R2).

The catalysed reaction is carbamoyl phosphate + L-aspartate = N-carbamoyl-L-aspartate + phosphate + H(+). The protein operates within pyrimidine metabolism; UMP biosynthesis via de novo pathway; (S)-dihydroorotate from bicarbonate: step 2/3. Its function is as follows. Catalyzes the condensation of carbamoyl phosphate and aspartate to form carbamoyl aspartate and inorganic phosphate, the committed step in the de novo pyrimidine nucleotide biosynthesis pathway. The protein is Aspartate carbamoyltransferase catalytic subunit of Brucella abortus (strain S19).